Consider the following 58-residue polypeptide: Large ribosomal subunit protein bL32c (58 aa).

The span at 1 to 19 (MAVPKKRKSKMKTRLRKAQ) shows a compositional bias: basic residues. The tract at residues 1–25 (MAVPKKRKSKMKTRLRKAQWKSEAS) is disordered.

Belongs to the bacterial ribosomal protein bL32 family.

The protein resides in the plastid. It localises to the chloroplast. The protein is Large ribosomal subunit protein bL32c (rpl32) of Chlorella vulgaris (Green alga).